The primary structure comprises 349 residues: MSATGLSPVRCAFVLLLALCSRPASGQDCSGQCQCAAGKRRACPAGVSLVLDGCGCCRLCAKQLGELCTERDPCDPHKGLFCDFGSPANRKIGVCTAKDGAPCVFGGTVYRSGESFQSSCKYQCTCLDGAVGCVPLCSMDVRLPSPDCPFPRRVKLPGKCCEEWVCDEPKDHTVVGPALAAYRLEDTFGPDPTMMRANCLVQTTEWSACSKTCGMGISTRVTNDNAFCRLEKQSRLCMVRPCEADLEENIKKGKKCIRTPKISKPVKFELSGCTSVKTYRAKFCGVCTDGRCCTPHRTTTLPVEFKCPDGEVMKKSMMFIKTCACHYNCPGDNDIFESLYYRKMYGDMA.

A signal peptide spans 1–26 (MSATGLSPVRCAFVLLLALCSRPASG). Positions 27–98 (QDCSGQCQCA…NRKIGVCTAK (72 aa)) constitute an IGFBP N-terminal domain. 6 disulfide bridges follow: cysteine 29-cysteine 54, cysteine 33-cysteine 56, cysteine 35-cysteine 57, cysteine 43-cysteine 60, cysteine 68-cysteine 82, and cysteine 74-cysteine 95. Positions 101-167 (APCVFGGTVY…GKCCEEWVCD (67 aa)) constitute a VWFC domain. One can recognise a TSP type-1 domain in the interval 198-243 (NCLVQTTEWSACSKTCGMGISTRVTNDNAFCRLEKQSRLCMVRPCE). A heparin-binding region spans residues 247 to 349 (EENIKKGKKC…YYRKMYGDMA (103 aa)). 5 disulfides stabilise this stretch: cysteine 256–cysteine 293, cysteine 273–cysteine 307, cysteine 284–cysteine 323, cysteine 287–cysteine 325, and cysteine 292–cysteine 329. The region spanning 256 to 330 (CIRTPKISKP…KTCACHYNCP (75 aa)) is the CTCK domain.

This sequence belongs to the CCN family. Monomer. Interacts with TSKU.

The protein resides in the secreted. The protein localises to the extracellular space. Its subcellular location is the extracellular matrix. Major connective tissue mitoattractant secreted by vascular endothelial cells. Promotes proliferation and differentiation of chondrocytes. Is involved in the stimulation of osteoblast differentiation and has a critical role in osteogenesis. Mediates heparin- and divalent cation-dependent cell adhesion in many cell types including fibroblasts, myofibroblasts, endothelial and epithelial cells. Enhances fibroblast growth factor-induced DNA synthesis. The chain is CCN family member 2 (CCN2) from Sus scrofa (Pig).